A 918-amino-acid chain; its full sequence is UPF0182 protein CPF_0011 (918 aa).

7 helical membrane-spanning segments follow: residues 8–28, 46–66, 91–111, 151–171, 200–220, 243–263, and 271–291; these read TVLISILLLVVVFFVSTNFII, LIAICKLFVPIFILYFCVIAI, FLLSNLVISILGAGATATTQW, AISLIIILVLITVIIYLALGF, LAVLASVLSLLIGCSYLLKSY, IFYKVIAVACVISSIVVFISI, and IIISIASIAVLIVLEPVVAIF. Over residues 857–869 the composition is skewed to basic and acidic residues; it reads EENKNSNKDETPK. A disordered region spans residues 857-876; it reads EENKNSNKDETPKNEITSDN.

The protein belongs to the UPF0182 family.

It is found in the cell membrane. The chain is UPF0182 protein CPF_0011 from Clostridium perfringens (strain ATCC 13124 / DSM 756 / JCM 1290 / NCIMB 6125 / NCTC 8237 / Type A).